The primary structure comprises 287 residues: Putative glutamate--cysteine ligase regulatory subunit (287 aa).

This sequence belongs to the aldo/keto reductase family. Glutamate--cysteine ligase light chain subfamily. Heterodimer of a catalytic heavy chain and a regulatory light chain.

Its subcellular location is the cytoplasm. It participates in sulfur metabolism; glutathione biosynthesis; glutathione from L-cysteine and L-glutamate: step 1/2. The sequence is that of Putative glutamate--cysteine ligase regulatory subunit from Schizosaccharomyces pombe (strain 972 / ATCC 24843) (Fission yeast).